The sequence spans 308 residues: Acetylglutamate kinase (308 aa).

Substrate contacts are provided by residues 67 to 68 (GG), R89, and N193.

It belongs to the acetylglutamate kinase family. ArgB subfamily.

It localises to the cytoplasm. It catalyses the reaction N-acetyl-L-glutamate + ATP = N-acetyl-L-glutamyl 5-phosphate + ADP. It functions in the pathway amino-acid biosynthesis; L-arginine biosynthesis; N(2)-acetyl-L-ornithine from L-glutamate: step 2/4. Its function is as follows. Catalyzes the ATP-dependent phosphorylation of N-acetyl-L-glutamate. This is Acetylglutamate kinase from Nitratidesulfovibrio vulgaris (strain DP4) (Desulfovibrio vulgaris).